The sequence spans 875 residues: Alanine--tRNA ligase (875 aa).

The Zn(2+) site is built by H564, H568, C666, and H670.

It belongs to the class-II aminoacyl-tRNA synthetase family. As to quaternary structure, homotetramer. The cofactor is Zn(2+).

The protein resides in the cytoplasm. The catalysed reaction is tRNA(Ala) + L-alanine + ATP = L-alanyl-tRNA(Ala) + AMP + diphosphate. Its function is as follows. Catalyzes the attachment of alanine to tRNA(Ala) in a two-step reaction: alanine is first activated by ATP to form Ala-AMP and then transferred to the acceptor end of tRNA(Ala). Also edits incorrectly charged Ser-tRNA(Ala) and Gly-tRNA(Ala) via its editing domain. The chain is Alanine--tRNA ligase from Klebsiella pneumoniae subsp. pneumoniae (strain ATCC 700721 / MGH 78578).